A 380-amino-acid polypeptide reads, in one-letter code: Succinyl-diaminopimelate desuccinylase (380 aa).

Histidine 69 is a Zn(2+) binding site. Aspartate 71 is an active-site residue. Aspartate 102 is a Zn(2+) binding site. The active-site Proton acceptor is glutamate 136. 3 residues coordinate Zn(2+): glutamate 137, glutamate 165, and histidine 351.

Belongs to the peptidase M20A family. DapE subfamily. In terms of assembly, homodimer. It depends on Zn(2+) as a cofactor. Co(2+) serves as cofactor.

It carries out the reaction N-succinyl-(2S,6S)-2,6-diaminopimelate + H2O = (2S,6S)-2,6-diaminopimelate + succinate. It participates in amino-acid biosynthesis; L-lysine biosynthesis via DAP pathway; LL-2,6-diaminopimelate from (S)-tetrahydrodipicolinate (succinylase route): step 3/3. Functionally, catalyzes the hydrolysis of N-succinyl-L,L-diaminopimelic acid (SDAP), forming succinate and LL-2,6-diaminopimelate (DAP), an intermediate involved in the bacterial biosynthesis of lysine and meso-diaminopimelic acid, an essential component of bacterial cell walls. The protein is Succinyl-diaminopimelate desuccinylase of Bordetella petrii (strain ATCC BAA-461 / DSM 12804 / CCUG 43448).